The following is a 106-amino-acid chain: uncharacterized protein (106 aa).

This is an uncharacterized protein from Escherichia coli O157:H7.